Consider the following 51-residue polypeptide: Ovomucoid (51 aa).

In terms of domain architecture, Kazal-like spans 3-51; it reads IDCSGYPKPACTLEFFPLCGSDNQTYSNKCAFCNAAVEKNVTLNHIGEC. Intrachain disulfides connect C5–C35, C13–C32, and C21–C51. An N-linked (GlcNAc...) asparagine glycan is attached at N42.

The protein resides in the secreted. This is Ovomucoid from Eudromia elegans (Elegant crested-tinamou).